The primary structure comprises 255 residues: Putative cysteine-rich repeat secretory protein 32 (255 aa).

An N-terminal signal peptide occupies residues methionine 1–serine 28. 2 consecutive Gnk2-homologous domains span residues tyrosine 35 to serine 136 and tyrosine 143 to phenylalanine 252.

It belongs to the cysteine-rich repeat secretory protein family.

The protein localises to the secreted. The protein is Putative cysteine-rich repeat secretory protein 32 (CRRSP32) of Arabidopsis thaliana (Mouse-ear cress).